The following is a 320-amino-acid chain: Porphobilinogen deaminase (320 aa).

Residue Cys251 is modified to S-(dipyrrolylmethanemethyl)cysteine.

It belongs to the HMBS family. In terms of assembly, monomer. The cofactor is dipyrromethane.

It carries out the reaction 4 porphobilinogen + H2O = hydroxymethylbilane + 4 NH4(+). It functions in the pathway porphyrin-containing compound metabolism; protoporphyrin-IX biosynthesis; coproporphyrinogen-III from 5-aminolevulinate: step 2/4. Functionally, tetrapolymerization of the monopyrrole PBG into the hydroxymethylbilane pre-uroporphyrinogen in several discrete steps. This chain is Porphobilinogen deaminase, found in Phenylobacterium zucineum (strain HLK1).